The following is a 1108-amino-acid chain: Receptor-type guanylate cyclase gcy-20 (1108 aa).

The signal sequence occupies residues 1–15 (MRILLLLLQNILVFC). Topologically, residues 16–474 (QFLQTIKVGL…ECPADFVKEY (459 aa)) are extracellular. Residues asparagine 66, asparagine 131, asparagine 319, asparagine 341, asparagine 366, and asparagine 380 are each glycosylated (N-linked (GlcNAc...) asparagine). Residues 475–495 (LVYTIIAAFIVILALLAGCAG) form a helical membrane-spanning segment. A Protein kinase domain is found at 483 to 803 (FIVILALLAG…IEQVRSHLNG (321 aa)). ATP-binding positions include 489-497 (LLAGCAGLL) and lysine 571. At 496–1108 (LLYTMHMKRK…QAGDNNSETV (613 aa)) the chain is on the cytoplasmic side. The Guanylate cyclase domain maps to 876 to 1006 (TIFFSDVVQF…DAVNTASRME (131 aa)). A disordered region spans residues 1083–1108 (LEKNAEGSETSSLSVDQAGDNNSETV). Polar residues predominate over residues 1089 to 1108 (GSETSSLSVDQAGDNNSETV).

It belongs to the adenylyl cyclase class-4/guanylyl cyclase family. As to expression, expressed asymmetrically in ASE left (ASEL) sensory neuron. Expressed in excretory gland and canal cell.

The protein resides in the cell membrane. The catalysed reaction is GTP = 3',5'-cyclic GMP + diphosphate. Guanylate cyclase involved in the production of the second messenger cGMP. The protein is Receptor-type guanylate cyclase gcy-20 of Caenorhabditis elegans.